Reading from the N-terminus, the 250-residue chain is Probable dihydroorotate dehydrogenase B (NAD(+)), electron transfer subunit (250 aa).

The region spanning 1-89 is the FAD-binding FR-type domain; sequence MINLKIEENV…RGPYGNGFDV (89 aa). 4 residues coordinate [2Fe-2S] cluster: cysteine 200, cysteine 205, cysteine 208, and cysteine 216.

The protein belongs to the PyrK family. As to quaternary structure, heterotetramer of 2 PyrK and 2 PyrD type B subunits. [2Fe-2S] cluster serves as cofactor. The cofactor is FAD.

Its pathway is pyrimidine metabolism; UMP biosynthesis via de novo pathway; orotate from (S)-dihydroorotate (NAD(+) route): step 1/1. In terms of biological role, responsible for channeling the electrons from the oxidation of dihydroorotate from the FMN redox center in the PyrD type B subunit to the ultimate electron acceptor NAD(+). The sequence is that of Probable dihydroorotate dehydrogenase B (NAD(+)), electron transfer subunit from Thermoplasma volcanium (strain ATCC 51530 / DSM 4299 / JCM 9571 / NBRC 15438 / GSS1).